The following is a 244-amino-acid chain: Sperm-egg fusion protein Juno (244 aa).

Residues 1-19 form the signal peptide; it reads MAQWWLILLGLWTVLPSLA. Cystine bridges form between Cys-27–Cys-55, Cys-47–Cys-95, Cys-56–Cys-99, Cys-79–Cys-166, Cys-86–Cys-137, Cys-126–Cys-200, Cys-130–Cys-180, and Cys-143–Cys-160. Residues 62–81 are important for interaction with IZUMO1; that stretch reads WEAHLDEPLLFNFSMTHCGL. N-linked (GlcNAc...) asparagine glycosylation is present at Asn-73. The propeptide occupies 223 to 244; the sequence is SASAPQLSYSITAFSLCLLLHA.

Belongs to the folate receptor family. As to quaternary structure, monomer. Interacts with IZUMO1; the interaction is direct. IZUMO1 and IZUMO1R/JUNO form a complex with 1:1 stoichiometry. Interacts with FCRL3/MAIA; FCRL3/MAIA replaces IZUMO1R/JUNO as IZUMO1 receptor after sperm-egg adhesion, thereby permitting species-specific gamete fusion. Interacts with WDR54. In terms of processing, the protein is rapidly cleaved following fertilization, being only weakly detectable in zona-intact fertilized eggs at telophase II and undetectable at the pronuclear stage. Sheding is probably required to block to polyspermy and ensuring egg fusion with a single sperm. As to expression, expressed in the oocyte (at protein level).

The protein localises to the cell membrane. Its subcellular location is the cell projection. The protein resides in the microvillus membrane. Functionally, receptor for IZUMO1 present at the cell surface of oocytes (oolemma), which is essential for species-specific gamete recognition and fertilization. The IZUMO1:IZUMO1R/JUNO interaction is a necessary adhesion event between sperm and egg that is required for fertilization but is not sufficient for cell fusion. The ligand-receptor interaction probably does not act as a membrane 'fusogen'. Does not bind folate. The protein is Sperm-egg fusion protein Juno (Izumo1r) of Rattus norvegicus (Rat).